Consider the following 95-residue polypeptide: Co-chaperonin GroES (95 aa).

Belongs to the GroES chaperonin family. Heptamer of 7 subunits arranged in a ring. Interacts with the chaperonin GroEL.

It localises to the cytoplasm. Functionally, together with the chaperonin GroEL, plays an essential role in assisting protein folding. The GroEL-GroES system forms a nano-cage that allows encapsulation of the non-native substrate proteins and provides a physical environment optimized to promote and accelerate protein folding. GroES binds to the apical surface of the GroEL ring, thereby capping the opening of the GroEL channel. The sequence is that of Co-chaperonin GroES from Chlorobium phaeobacteroides (strain BS1).